The sequence spans 1488 residues: Chromosome partition protein MukB (1488 aa).

34–41 (GGNGAGKS) serves as a coordination point for ATP. Coiled-coil stretches lie at residues 326–418 (LEAD…QYNQ), 444–472 (LDTF…QTAH), and 509–602 (RHLA…QRAP). Residues 666–783 (PGGAEDQRLN…SLPIFGRAAR (118 aa)) form a flexible hinge region. 3 coiled-coil regions span residues 835 to 923 (EAEI…AKLE), 977 to 1116 (EMLS…AKAG), and 1209 to 1265 (VEAI…LQSV).

This sequence belongs to the SMC family. MukB subfamily. In terms of assembly, homodimerization via its hinge domain. Binds to DNA via its C-terminal region. Interacts, and probably forms a ternary complex, with MukE and MukF via its C-terminal region. The complex formation is stimulated by calcium or magnesium. Interacts with tubulin-related protein FtsZ.

It is found in the cytoplasm. Its subcellular location is the nucleoid. In terms of biological role, plays a central role in chromosome condensation, segregation and cell cycle progression. Functions as a homodimer, which is essential for chromosome partition. Involved in negative DNA supercoiling in vivo, and by this means organize and compact chromosomes. May achieve or facilitate chromosome segregation by condensation DNA from both sides of a centrally located replisome during cell division. The sequence is that of Chromosome partition protein MukB from Salmonella paratyphi B (strain ATCC BAA-1250 / SPB7).